A 1035-amino-acid polypeptide reads, in one-letter code: Integrin alpha-9 (1035 aa).

Positions 1–29 are cleaved as a signal peptide; it reads MGGPAAPRGAGRLRALLLALVVAGIPAGA. The Extracellular portion of the chain corresponds to 30-981; sequence YNLDPQRPVH…LEPRGYVVGW (952 aa). 7 FG-GAP repeats span residues 35–96, 111–174, 182–232, 233–289, 290–349, 351–408, and 411–474; these read QRPV…PDRR, SCGK…AKGR, EYKK…NTYL, KLND…SGTL, IKIF…GALE, QLAL…GIVP, and SMKL…LPGS. Intrachain disulfides connect Cys87–Cys97, Cys142–Cys162, and Cys179–Cys194. N-linked (GlcNAc...) asparagine glycosylation occurs at Asn225. 12 residues coordinate Ca(2+): Asp312, Asn314, Asp316, Asp320, Asp373, Asp375, Asp377, Asp381, Asp435, Asp437, Asn439, and Asp443. Asn476 is a glycosylation site (N-linked (GlcNAc...) asparagine). Cys482 and Cys491 form a disulfide bridge. N-linked (GlcNAc...) asparagine glycosylation is present at Asn493. Cysteines 497 and 555 form a disulfide. A glycan (N-linked (GlcNAc...) asparagine) is linked at Asn612. Cys620 and Cys625 are disulfide-bonded. 4 N-linked (GlcNAc...) asparagine glycosylation sites follow: Asn654, Asn658, Asn672, and Asn676. Cys696 and Cys706 are disulfide-bonded. N-linked (GlcNAc...) asparagine glycans are attached at residues Asn807 and Asn854. Intrachain disulfides connect Cys855–Cys891 and Cys898–Cys903. N-linked (GlcNAc...) asparagine glycosylation is present at Asn904. Residues 982–1002 traverse the membrane as a helical segment; sequence IIAISLLVGILIFLLLAVLLW. Residues 1003-1035 are Cytoplasmic-facing; it reads KMGFFRRRYKEIIEAEKNRKENEDSWDWVQKNQ. The GFFKR motif motif lies at 1005–1009; the sequence is GFFRR.

Belongs to the integrin alpha chain family. Heterodimer of an alpha and a beta subunit. Alpha-9 (ITGA9) associates with beta-1 (ITGB1). Integrin ITGA9:ITGB1 interacts with FBLN5 (via N-terminus). Integrin ITGA9:ITGB1 interacts with SPP1/OPN (via N-terminus). Integrin ITGA9:ITGB1 interacts with TNC/TNFN3 (via the 3rd Fibronectin type-III domain). Integrin ITGA9:ITGB1 interacts with SVEP1/polydom (via Sushi domain 21); thereby inhibits Ca(2+) intracellular signaling and as a result represses vasocontraction. In terms of tissue distribution, expressed in vascular smooth muscle cells (at protein level). Expressed in the airway epithelium (at protein level).

The protein localises to the membrane. In terms of biological role, integrin alpha-9/beta-1 (ITGA9:ITGB1) is a receptor for VCAM1, cytotactin and osteopontin. It recognizes the sequence A-E-I-D-G-I-E-L in cytotactin. ITGA9:ITGB1 may play a crucial role in SVEP1/polydom-mediated myoblast cell adhesion. Integrin ITGA9:ITGB1 represses PRKCA-mediated L-type voltage-gated channel Ca(2+) influx and ROCK-mediated calcium sensitivity in vascular smooth muscle cells via its interaction with SVEP1, thereby inhibiting vasocontraction. The chain is Integrin alpha-9 (ITGA9) from Homo sapiens (Human).